Reading from the N-terminus, the 182-residue chain is UPF0690 protein C1orf52 homolog (182 aa).

The segment at 1 to 61 (MAAEEKDPLS…AEKRLPGPDE (61 aa)) is disordered. The segment covering 23–32 (SDEEDNSEPE) has biased composition (acidic residues). A compositionally biased stretch (basic and acidic residues) spans 51-61 (KAEKRLPGPDE). The residue at position 67 (Thr-67) is a Phosphothreonine. Phosphotyrosine is present on Tyr-132. Residues 132-182 (YEDNGDDAPQNAKKARLLPEGEETVESDDEKDEHTSKKRKIELGEPTKKKK) are disordered. Over residues 151–162 (EGEETVESDDEK) the composition is skewed to acidic residues. A Phosphoserine modification is found at Ser-158. The segment covering 172–182 (IELGEPTKKKK) has biased composition (basic and acidic residues).

The protein belongs to the UPF0690 family.

This chain is UPF0690 protein C1orf52 homolog, found in Bos taurus (Bovine).